A 518-amino-acid polypeptide reads, in one-letter code: ATP synthase subunit alpha (518 aa).

169 to 176 (GDRQTGKT) serves as a coordination point for ATP.

The protein belongs to the ATPase alpha/beta chains family. As to quaternary structure, F-type ATPases have 2 components, CF(1) - the catalytic core - and CF(0) - the membrane proton channel. CF(1) has five subunits: alpha(3), beta(3), gamma(1), delta(1), epsilon(1). CF(0) has three main subunits: a(1), b(2) and c(9-12). The alpha and beta chains form an alternating ring which encloses part of the gamma chain. CF(1) is attached to CF(0) by a central stalk formed by the gamma and epsilon chains, while a peripheral stalk is formed by the delta and b chains.

The protein localises to the cell membrane. It catalyses the reaction ATP + H2O + 4 H(+)(in) = ADP + phosphate + 5 H(+)(out). Its function is as follows. Produces ATP from ADP in the presence of a proton gradient across the membrane. The alpha chain is a regulatory subunit. This chain is ATP synthase subunit alpha, found in Mycoplasma pneumoniae (strain ATCC 29342 / M129 / Subtype 1) (Mycoplasmoides pneumoniae).